Reading from the N-terminus, the 100-residue chain is Small ribosomal subunit protein uS14c (100 aa).

Belongs to the universal ribosomal protein uS14 family. Part of the 30S ribosomal subunit.

Its subcellular location is the plastid. It localises to the chloroplast. Binds 16S rRNA, required for the assembly of 30S particles. This is Small ribosomal subunit protein uS14c from Draba nemorosa (Woodland whitlowgrass).